The chain runs to 682 residues: NAD(+)--arginine ADP-ribosyltransferase (682 aa).

In terms of domain architecture, TR mART core spans 383–614 (KIIRRELRGY…KLIQAEVMTT (232 aa)). Catalysis depends on residues R478, S503, and E576.

It belongs to the Tevenvirinae NAD(+)--arginine ADP-ribosyltransferase family. In terms of processing, proteolytic cleavages at the N- and C-termini by the prohead core protein protease give rise to the mature enzyme.

Its subcellular location is the virion. It carries out the reaction L-arginyl-[protein] + NAD(+) = N(omega)-(ADP-D-ribosyl)-L-arginyl-[protein] + nicotinamide + H(+). Its function is as follows. ADP-ribosyltransferase that efficiently ADP-ribosylates one of the two alpha subunits of host RNA polymerase RPOA on an arginine located in the C-terminal region. ADP-ribosylation of RPOA alpha subunit enhances the transcription of viral early genes. Also ribosylates RPOA subunits beta, beta' and sigma 70 and performs an autoribosylation reaction. Additional in-vitro identified targets include proteins involved in either translation or cellular metabolism such as elongation factor-Tu or GroeL. Mono-ADP-ribosylates host MAZF which may inactivate the latter. The chain is NAD(+)--arginine ADP-ribosyltransferase (alt) from Escherichia coli (Bacteriophage T4).